We begin with the raw amino-acid sequence, 913 residues long: MFAPLLKKLFGSKNEREVKRMLKTVQIVNAFEEQMVALSDEQLRAKTEEFKARIAKGETLDQLLPEAFAVAREAGKRVMGMRHFDVQLIGGMTLHEGQIAEMRTGEGKTLVGTLAVYLNALSGKGVHVVTVNDYLARRDANWMRPLYEFLGLTVGIVTPFQPPEEKRAAYAADITYGTNNEYGFDYLRDNMAFSMDDKFQRELNFAVIDEVDSILIDEARTPLIISGQAEDSSKLYTEINRLIPKLEQHIEEVEGEVTKAGHFTVDEKTRQVELNEAGHQFIEEMLTEVGLLAEGESLYSAHNLGLLTHVYAGLRAHKLFNRNVEYIVSDGQVLLVDEHTGRTMPGRRLSEGLHQAIEAKEGLNIQAESQTLASTTFQNYFRLYNKLSGMTGTADTEAFEFHQIYNLAVMVIPPNKPLARKDFNDLVYLTAEEKYAAIVTDIKACIAENRPVLVGTATIETSEHMSNLLNKEGIEHKVLNAKFHEKEAEIIAQAGRPGALTIATNMAGRGTDILLGGNWEVEVANLEDPTPEQIAQIKADWQKRHQQVIEAGGLHVIASERHESRRIDNQLRGRAGRQGDTGSSRFYLSLEDSLMRIFASDRVKNFMKALGMQSGEAIEHRMVTNAIEKAQRKVEGRNFDIRKQLLEFDDVANEQRKVIYHMRNTLLAAENIGETIADFREEVLNNLISQHIPPQSLPEQWNVAGLESALNTDFAVQLPIQQWLDEDDKLHEDSLREKIMAQLLVAYNEKEDQASAEALRSFEKQILLRVLDDLWKDHLSTMDHLRHGIHLRGYAQKNPKQEYKRESFTLFQELLDSIKRDTIRVLSHVQVRREDPEEEEARLRQDAEELASRMQFEHAPAPGIEQPLLDEEGGGAPVAVASEPVRNDQKLGRNELCWCGSGKKFKHCHGQIN.

Residues glutamine 87, 105–109 (GEGKT), and aspartate 512 each bind ATP. Zn(2+)-binding residues include cysteine 897, cysteine 899, cysteine 908, and histidine 909.

Belongs to the SecA family. In terms of assembly, monomer and homodimer. Part of the essential Sec protein translocation apparatus which comprises SecA, SecYEG and auxiliary proteins SecDF-YajC and YidC. Requires Zn(2+) as cofactor.

The protein resides in the cell inner membrane. It localises to the cytoplasm. The enzyme catalyses ATP + H2O + cellular proteinSide 1 = ADP + phosphate + cellular proteinSide 2.. In terms of biological role, part of the Sec protein translocase complex. Interacts with the SecYEG preprotein conducting channel. Has a central role in coupling the hydrolysis of ATP to the transfer of proteins into and across the cell membrane, serving both as a receptor for the preprotein-SecB complex and as an ATP-driven molecular motor driving the stepwise translocation of polypeptide chains across the membrane. This is Protein translocase subunit SecA from Pseudomonas syringae pv. syringae (strain B728a).